The following is a 98-amino-acid chain: Large ribosomal subunit protein uL23 (98 aa).

It belongs to the universal ribosomal protein uL23 family. In terms of assembly, part of the 50S ribosomal subunit. Contacts protein L29, and trigger factor when it is bound to the ribosome.

Its function is as follows. One of the early assembly proteins it binds 23S rRNA. One of the proteins that surrounds the polypeptide exit tunnel on the outside of the ribosome. Forms the main docking site for trigger factor binding to the ribosome. The polypeptide is Large ribosomal subunit protein uL23 (Frankia alni (strain DSM 45986 / CECT 9034 / ACN14a)).